Reading from the N-terminus, the 206-residue chain is Small ribosomal subunit protein uS4 (206 aa).

The S4 RNA-binding domain maps to 98–161 (RRLDNVVYRL…RSMELIKNNL (64 aa)).

This sequence belongs to the universal ribosomal protein uS4 family. As to quaternary structure, part of the 30S ribosomal subunit. Contacts protein S5. The interaction surface between S4 and S5 is involved in control of translational fidelity.

Functionally, one of the primary rRNA binding proteins, it binds directly to 16S rRNA where it nucleates assembly of the body of the 30S subunit. Its function is as follows. With S5 and S12 plays an important role in translational accuracy. This Caldanaerobacter subterraneus subsp. tengcongensis (strain DSM 15242 / JCM 11007 / NBRC 100824 / MB4) (Thermoanaerobacter tengcongensis) protein is Small ribosomal subunit protein uS4.